A 238-amino-acid polypeptide reads, in one-letter code: MASSPKLFSMSILFLFALFSMQIHAREYFSKFPRVNINEKETTTREQKHETFVPQTTQKPEEQEPRFIPETQNGYGLYGHESGSSRPSFTTKETYEPYVTPVRFHPDEPYNSIPESSNNKDTYYYNKNAYESTKQQNLGEAIFTEKGWSTKENQNNNYYNGNNGYNNGEKQGMSDTRYLENGKYYYDVKSENNYYPNRFDNSRGVASRNEFNENRYNNMGRYHQNQEEFEESEEEFEP.

Basic and acidic residues predominate over residues 40-51 (KETTTREQKHET). Disordered regions lie at residues 40–64 (KETT…EEQE) and 210–238 (EFNE…EFEP). Positions 227 to 238 (EEFEESEEEFEP) are enriched in acidic residues.

It is predominantly expressed in fiber cells.

It localises to the secreted. The protein localises to the cell wall. The chain is Protein E6 (E6) from Gossypium hirsutum (Upland cotton).